Consider the following 1370-residue polypeptide: DNA-directed RNA polymerase subunit beta (1370 aa).

Belongs to the RNA polymerase beta chain family. In terms of assembly, the RNAP catalytic core consists of 2 alpha, 1 beta, 1 beta' and 1 omega subunit. When a sigma factor is associated with the core the holoenzyme is formed, which can initiate transcription.

It carries out the reaction RNA(n) + a ribonucleoside 5'-triphosphate = RNA(n+1) + diphosphate. DNA-dependent RNA polymerase catalyzes the transcription of DNA into RNA using the four ribonucleoside triphosphates as substrates. This is DNA-directed RNA polymerase subunit beta from Bordetella pertussis (strain Tohama I / ATCC BAA-589 / NCTC 13251).